The chain runs to 105 residues: Large ribosomal subunit protein uL24 (105 aa).

The protein belongs to the universal ribosomal protein uL24 family. In terms of assembly, part of the 50S ribosomal subunit.

Functionally, one of two assembly initiator proteins, it binds directly to the 5'-end of the 23S rRNA, where it nucleates assembly of the 50S subunit. One of the proteins that surrounds the polypeptide exit tunnel on the outside of the subunit. In Nitrosospira multiformis (strain ATCC 25196 / NCIMB 11849 / C 71), this protein is Large ribosomal subunit protein uL24.